Here is a 281-residue protein sequence, read N- to C-terminus: Aldo-keto reductase MMAR_1744 (281 aa).

The Proton donor role is filled by Tyr-56. NADPH is bound by residues Leu-196, Ile-234, Ser-237, Thr-245, Asn-246, and Arg-272.

This sequence belongs to the aldo/keto reductase family.

The polypeptide is Aldo-keto reductase MMAR_1744 (Mycobacterium marinum (strain ATCC BAA-535 / M)).